Here is a 132-residue protein sequence, read N- to C-terminus: Pro-MCH 1 (132 aa).

An N-terminal signal peptide occupies residues 1 to 24; that stretch reads MRDSVLSVIFALALFLECYTPSMA. Cysteines 120 and 129 form a disulfide.

Belongs to the MCH family. Pituitary gland. Produced in neurons of lateral basal hypothalamus which project both to the brain and to the neural lobe of the pituitary gland from where MCH is released.

In terms of biological role, plays a role in skin pigmentation by antagonizing the action of melanotropin alpha. Induces melanin concentration within the melanophores. May participate in the control of the hypothalamo-pituitary adrenal gland axis by inhibiting the release of ACTH. This chain is Pro-MCH 1 (mch1), found in Oncorhynchus kisutch (Coho salmon).